We begin with the raw amino-acid sequence, 948 residues long: RNA polymerase-associated protein RapA (948 aa).

Residues 164 to 332 form the Helicase ATP-binding domain; sequence EVADRIAPRV…FARLRLLDPN (169 aa). Residue 177-184 participates in ATP binding; it reads DEVGLGKT. The DEAH box signature appears at 278-281; it reads DEAH. The Helicase C-terminal domain maps to 473–627; the sequence is RVEWLIDQLK…TCPTGNALQH (155 aa).

The protein belongs to the SNF2/RAD54 helicase family. RapA subfamily. Interacts with the RNAP. Has a higher affinity for the core RNAP than for the holoenzyme. Its ATPase activity is stimulated by binding to RNAP.

Its function is as follows. Transcription regulator that activates transcription by stimulating RNA polymerase (RNAP) recycling in case of stress conditions such as supercoiled DNA or high salt concentrations. Probably acts by releasing the RNAP, when it is trapped or immobilized on tightly supercoiled DNA. Does not activate transcription on linear DNA. Probably not involved in DNA repair. This is RNA polymerase-associated protein RapA from Pseudomonas fluorescens (strain Pf0-1).